The chain runs to 472 residues: Ribosomal protein uS12 methylthiotransferase RimO (472 aa).

An MTTase N-terminal domain is found at 33-143 (NRIGFVSLGC…VLKHVHKYVP (111 aa)). C42, C78, C107, C175, C179, and C182 together coordinate [4Fe-4S] cluster. The Radical SAM core domain occupies 161 to 398 (LTPKHYAYLK…MELQAEISAE (238 aa)). Positions 401–467 (ARFVGRTLDI…EHDLWAEVVD (67 aa)) constitute a TRAM domain.

The protein belongs to the methylthiotransferase family. RimO subfamily. Requires [4Fe-4S] cluster as cofactor.

It localises to the cytoplasm. The catalysed reaction is L-aspartate(89)-[ribosomal protein uS12]-hydrogen + (sulfur carrier)-SH + AH2 + 2 S-adenosyl-L-methionine = 3-methylsulfanyl-L-aspartate(89)-[ribosomal protein uS12]-hydrogen + (sulfur carrier)-H + 5'-deoxyadenosine + L-methionine + A + S-adenosyl-L-homocysteine + 2 H(+). Functionally, catalyzes the methylthiolation of an aspartic acid residue of ribosomal protein uS12. The chain is Ribosomal protein uS12 methylthiotransferase RimO from Shewanella putrefaciens (strain CN-32 / ATCC BAA-453).